A 56-amino-acid chain; its full sequence is Large ribosomal subunit protein bL32 (56 aa).

Belongs to the bacterial ribosomal protein bL32 family.

This is Large ribosomal subunit protein bL32 from Edwardsiella ictaluri (strain 93-146).